We begin with the raw amino-acid sequence, 215 residues long: Redox-sensing transcriptional repressor Rex (215 aa).

The segment at residues 18–57 (LYYRFLKNLHASGKQRVSSAELSDAVKVDSATIRRDFSYF) is a DNA-binding region (H-T-H motif). 92-97 (GVGNLG) lines the NAD(+) pocket.

Belongs to the transcriptional regulatory Rex family. In terms of assembly, homodimer.

The protein localises to the cytoplasm. Its function is as follows. Modulates transcription in response to changes in cellular NADH/NAD(+) redox state. The polypeptide is Redox-sensing transcriptional repressor Rex (Bacillus licheniformis (strain ATCC 14580 / DSM 13 / JCM 2505 / CCUG 7422 / NBRC 12200 / NCIMB 9375 / NCTC 10341 / NRRL NRS-1264 / Gibson 46)).